Consider the following 171-residue polypeptide: Outer membrane lipoprotein Blc (171 aa).

The N-terminal stretch at 1 to 15 (MRAIFLILCSVLLNG) is a signal peptide. Cys16 carries N-palmitoyl cysteine lipidation. Residue Cys16 is the site of S-diacylglycerol cysteine attachment.

It belongs to the calycin superfamily. Lipocalin family. Homodimer.

The protein localises to the cell outer membrane. Involved in the storage or transport of lipids necessary for membrane maintenance under stressful conditions. Displays a binding preference for lysophospholipids. The protein is Outer membrane lipoprotein Blc (blc) of Vibrio cholerae serotype O1 (strain ATCC 39315 / El Tor Inaba N16961).